The sequence spans 210 residues: Large ribosomal subunit protein uL4 (210 aa).

Positions 44–79 (QHQGTHKVKTRSEVSGGGRKPYRQKGTGNARRGSSR) are disordered.

Belongs to the universal ribosomal protein uL4 family. As to quaternary structure, part of the 50S ribosomal subunit.

In terms of biological role, one of the primary rRNA binding proteins, this protein initially binds near the 5'-end of the 23S rRNA. It is important during the early stages of 50S assembly. It makes multiple contacts with different domains of the 23S rRNA in the assembled 50S subunit and ribosome. Forms part of the polypeptide exit tunnel. The sequence is that of Large ribosomal subunit protein uL4 from Chloroherpeton thalassium (strain ATCC 35110 / GB-78).